A 149-amino-acid polypeptide reads, in one-letter code: NADH-quinone oxidoreductase subunit A (149 aa).

Helical transmembrane passes span 16-36 (FAVFLLGAFGLCALMLLGAFF), 68-88 (FYLVAMFFVIFDVEALFLYAW), and 98-118 (LGFIEASIFILVLLAGLFYLV).

The protein belongs to the complex I subunit 3 family. As to quaternary structure, NDH-1 is composed of 13 different subunits. Subunits NuoA, H, J, K, L, M, N constitute the membrane sector of the complex.

Its subcellular location is the cell inner membrane. The enzyme catalyses a quinone + NADH + 5 H(+)(in) = a quinol + NAD(+) + 4 H(+)(out). Its function is as follows. NDH-1 shuttles electrons from NADH, via FMN and iron-sulfur (Fe-S) centers, to quinones in the respiratory chain. The immediate electron acceptor for the enzyme in this species is believed to be ubiquinone. Couples the redox reaction to proton translocation (for every two electrons transferred, four hydrogen ions are translocated across the cytoplasmic membrane), and thus conserves the redox energy in a proton gradient. The protein is NADH-quinone oxidoreductase subunit A of Photorhabdus laumondii subsp. laumondii (strain DSM 15139 / CIP 105565 / TT01) (Photorhabdus luminescens subsp. laumondii).